The sequence spans 219 residues: Asperlin biosynthesis cluster protein I (219 aa).

The interval Thr97–Ala124 is disordered. Residues Thr105 to Gly116 show a composition bias toward low complexity.

It functions in the pathway polyketide biosynthesis. Its function is as follows. Part of the gene cluster that mediates the biosynthesis of asperlin, a polyketide showing anti-inflammatory, antitumor and antibiotic activities. The first step of the asperlin biosynthesis is the production of the intermediate 2,4,6-octatrienoic acid by the highly redusing polyketide synthase alnA with cleavage of the PKS product by the esterase alnB. 2,4,6-octatrienoic acid is further converted to asperlin via several steps involving the remaining enzymes from the cluster. This chain is Asperlin biosynthesis cluster protein I, found in Emericella nidulans (strain FGSC A4 / ATCC 38163 / CBS 112.46 / NRRL 194 / M139) (Aspergillus nidulans).